The following is a 525-amino-acid chain: Sterol O-acyltransferase 2 (525 aa).

Disordered regions lie at residues 1 to 34 (MQPK…THGT) and 77 to 97 (QDRP…ELHP). At 1 to 119 (MQPKVPQLRR…IDELMEVQHF (119 aa)) the chain is on the cytoplasmic side. The span at 9–23 (RRREGLGEEQEKGAR) shows a compositional bias: basic and acidic residues. Residue His-118 participates in cholesterol binding. Residues 120 to 141 (RTIYHMFIAGLCVLIISTLAID) traverse the membrane as a helical segment. Residues 142–161 (FIDEGRLMLEFDLLLFSFGQ) are Lumenal-facing. The helical transmembrane segment at 162 to 187 (LPLALMTWVPMFLSTLLVPYQTLWLW) threads the bilayer. Residues 188–199 (ARPRAGGAWMLG) are Cytoplasmic-facing. A helical membrane pass occupies residues 200–223 (ASLGCVLLAAHAVVLCVLPVHVSV). Over 224–231 (RHELPPAS) the chain is Lumenal. A helical transmembrane segment spans residues 232 to 255 (RCVLVFEQVRLLMKSYSFLRETVP). The Cytoplasmic portion of the chain corresponds to 256-296 (GIFCVRGGKGISPPSFSSYLYFLFCPTLIYRETYPRTPSIR). Cys-280 bears the Cysteine sulfenic acid (-SOH); alternate mark. A Glycyl cysteine thioester (Cys-Gly) (interchain with G-Cter in ubiquitin); alternate cross-link involves residue Cys-280. The helical transmembrane segment at 297 to 329 (WNYVAKNFAQVLGCLLYACFILGRLCVPVFANM) threads the bilayer. Residues 330–346 (SREPFSTRALLLSILHA) are Lumenal-facing. The chain crosses the membrane as a helical span at residues 347–372 (TGPGIFMLLLIFFAFLHCWLNAFAEM). The Cytoplasmic segment spans residues 373-420 (LRFGDRMFYRDWWNSTSFSNYYRTWNVVVHDWLYSYVYQDGLWLLGRR). Residues 380–386 (FYRDWWN) carry the FYXDWWN motif motif. An acyl-CoA-binding residues include Asn-392, Arg-395, Asn-398, His-402, Tyr-410, and Ser-433. The helical transmembrane segment at 421–445 (ARGVAMLGVFLVSAVVHEYIFCFVL) threads the bilayer. His-437 is a catalytic residue. Residues 446–451 (GFFYPV) lie on the Lumenal side of the membrane. Residues 452–467 (MLMLFLVFGGLLNFTM) traverse the membrane as a helical segment. Residues 468-473 (NDRHTG) lie on the Cytoplasmic side of the membrane. Residues 474-505 (PAWNILMWTFLFMGQGIQVSLYCQEWYARRHC) traverse the membrane as a helical segment. Over 506–525 (PLPQTTFWGMVTPRSWSCHP) the chain is Lumenal.

This sequence belongs to the membrane-bound acyltransferase family. Sterol o-acyltransferase subfamily. In terms of assembly, may form homo- or heterodimers. Interacts with INSIG1; the interaction is direct and promotes association with AMFR/gp78. In terms of processing, polyubiquitinated by AMFR/gp78 at Cys-280, leading to its degradation when the lipid levels are low. Association with AMFR/gp78 is mediated via interaction with INSIG1. High concentration of cholesterol and fatty acid results in Cys-280 oxidation, preventing ubiquitination at the same site, resulting in protein stabilization. Post-translationally, oxidized at Cys-280: high concentration of cholesterol and fatty acid induce reactive oxygen species, which oxidizes Cys-280, preventing ubiquitination at the same site, and resulting in protein stabilization.

Its subcellular location is the endoplasmic reticulum membrane. It catalyses the reaction a sterol + a long-chain fatty acyl-CoA = a long-chain 3-hydroxysterol ester + CoA. The catalysed reaction is cholesterol + an acyl-CoA = a cholesterol ester + CoA. It carries out the reaction cholesterol + (9Z)-octadecenoyl-CoA = cholesteryl (9Z-octadecenoate) + CoA. The enzyme catalyses (5Z,8Z,11Z,14Z,17Z)-eicosapentaenoyl-CoA + cholesterol = (5Z,8Z,11Z,14Z,17Z-eicosapentaenoyl)-cholesterol + CoA. It catalyses the reaction (9Z,12Z,15Z)-octadecatrienoyl-CoA + cholesterol = (9Z,12Z,15Z-octadecatrienoyl)-cholesterol + CoA. The catalysed reaction is (5Z,8Z,11Z,14Z)-eicosatetraenoyl-CoA + cholesterol = cholesteryl (5Z,8Z,11Z,14Z)-eicosatetraenoate + CoA. In terms of biological role, catalyzes the formation of fatty acid-cholesterol esters, which are less soluble in membranes than cholesterol. Plays a role in lipoprotein assembly and dietary cholesterol absorption. Utilizes oleoyl-CoA ((9Z)-octadecenoyl-CoA) and linolenoyl-CoA ((9Z,12Z,15Z)-octadecatrienoyl-CoA) as substrates. May provide cholesteryl esters for lipoprotein secretion from hepatocytes and intestinal mucosa. The polypeptide is Sterol O-acyltransferase 2 (Mus musculus (Mouse)).